Here is a 252-residue protein sequence, read N- to C-terminus: Triosephosphate isomerase (252 aa).

10–12 (NWK) provides a ligand contact to substrate. His96 (electrophile) is an active-site residue. Residue Glu168 is the Proton acceptor of the active site. Substrate is bound by residues Gly174, Ser213, and 234–235 (GG).

It belongs to the triosephosphate isomerase family. In terms of assembly, homodimer.

It localises to the cytoplasm. The enzyme catalyses D-glyceraldehyde 3-phosphate = dihydroxyacetone phosphate. Its pathway is carbohydrate biosynthesis; gluconeogenesis. It participates in carbohydrate degradation; glycolysis; D-glyceraldehyde 3-phosphate from glycerone phosphate: step 1/1. In terms of biological role, involved in the gluconeogenesis. Catalyzes stereospecifically the conversion of dihydroxyacetone phosphate (DHAP) to D-glyceraldehyde-3-phosphate (G3P). The chain is Triosephosphate isomerase from Idiomarina loihiensis (strain ATCC BAA-735 / DSM 15497 / L2-TR).